The chain runs to 158 residues: Protein OPG060 (158 aa).

It belongs to the orthopoxvirus OPG058 family.

This is Protein OPG060 (OPG060) from Cynomys gunnisoni (Gunnison's prairie dog).